Reading from the N-terminus, the 78-residue chain is UPF0335 protein A1C_00850 (78 aa).

Belongs to the UPF0335 family.

The protein is UPF0335 protein A1C_00850 of Rickettsia akari (strain Hartford).